Reading from the N-terminus, the 428-residue chain is tRNA(Ile2) 2-agmatinylcytidine synthetase TiaS (428 aa).

Belongs to the TiaS family.

It localises to the cytoplasm. The enzyme catalyses cytidine(34) in tRNA(Ile2) + agmatine + ATP + H2O = 2-agmatinylcytidine(34) in tRNA(Ile2) + AMP + 2 phosphate + 2 H(+). ATP-dependent agmatine transferase that catalyzes the formation of 2-agmatinylcytidine (agm2C) at the wobble position (C34) of tRNA(Ile2), converting the codon specificity from AUG to AUA. This Methanosarcina acetivorans (strain ATCC 35395 / DSM 2834 / JCM 12185 / C2A) protein is tRNA(Ile2) 2-agmatinylcytidine synthetase TiaS.